The following is a 353-amino-acid chain: Tsukushi (353 aa).

Residues 1–17 form the signal peptide; the sequence is MLCTLFLLLLALGIVQT. In terms of domain architecture, LRRNT spans 18–59; that stretch reads TRPCFPGCQCEEETFGLFDSFSLIRVDCSSLGPHIVPVPIPL. LRR repeat units lie at residues 60 to 80, 86 to 107, 110 to 131, 133 to 154, 160 to 180, 186 to 207, 208 to 228, 231 to 253, 256 to 277, and 281 to 302; these read DTAH…SVLG, TLAG…AFSR, YLES…VFTS, PLSD…AFTT, ALHV…PARA, TIQS…RDLP, LRYL…AFMG, GLTH…GFRE, GLQV…EVFS, and LLQE…LLHH. Asn-75 is a glycosylation site (N-linked (GlcNAc...) asparagine). Asn-138 carries N-linked (GlcNAc...) asparagine glycosylation. Asn-191 is a glycosylation site (N-linked (GlcNAc...) asparagine).

Interacts with FZD4 (via FZ domain); competes with WNT2B for binding to FZD4, inhibiting Wnt signaling and repressing peripheral eye development. Interacts with TGFB1; the interaction contributes to regulation of the hair cycle. Interacts with netrin. Interacts with CCN2. In terms of tissue distribution, expressed at high levels in the liver, small intestine and placenta. Not or barely detectable in other tissues, including whole pancreas, adipose tissues, skeletal muscle, kidney, spleen, brain, lung and testis.

The protein localises to the secreted. Contributes to various developmental events and other processes such as wound healing and cholesterol homeostasis through its interactions with multiple signaling pathways. Wnt signaling inhibitor which competes with WNT2B for binding to Wnt receptor FZD4 and represses WNT2B-dependent development of the peripheral eye. Plays a role in regulating the hair cycle by controlling TGFB1 signaling. Required for the development of the anterior commissure in the brain by inhibiting neurite outgrowth. Essential for terminal differentiation of hippocampal neural stem cells. Plays a role in regulating bone elongation and bone mass by modulating growth plate chondrocyte function and overall body size. Required for development of the inner ear through its involvement in stereocilia formation in inner hair cells. Facilitates wound healing by inhibiting secretion of TGFB1 from macrophages which prevents myofibroblast differentiation, maintaining inflammatory cell quiescence. Plays a role in cholesterol homeostasis by reducing circulating high-density lipoprotein cholesterol, lowering cholesterol efflux capacity and decreasing cholesterol-to-bile acid conversion in the liver. In one study, shown to negatively regulate sympathetic innervation in brown fat, leading to reduced energy expenditure. In another study, shown not to affect brown fat thermogenic capacity, body weight gain or glucose homeostasis. The chain is Tsukushi (Tsku) from Rattus norvegicus (Rat).